A 54-amino-acid polypeptide reads, in one-letter code: Large ribosomal subunit protein bL33A (54 aa).

It belongs to the bacterial ribosomal protein bL33 family.

The sequence is that of Large ribosomal subunit protein bL33A from Streptomyces avermitilis (strain ATCC 31267 / DSM 46492 / JCM 5070 / NBRC 14893 / NCIMB 12804 / NRRL 8165 / MA-4680).